Here is a 617-residue protein sequence, read N- to C-terminus: Dihydroxy-acid dehydratase (617 aa).

Residue aspartate 81 coordinates Mg(2+). Position 122 (cysteine 122) interacts with [2Fe-2S] cluster. Positions 123 and 124 each coordinate Mg(2+). Residue lysine 124 is modified to N6-carboxylysine. A [2Fe-2S] cluster-binding site is contributed by cysteine 195. A Mg(2+)-binding site is contributed by glutamate 492. Serine 518 acts as the Proton acceptor in catalysis.

It belongs to the IlvD/Edd family. Homodimer. It depends on [2Fe-2S] cluster as a cofactor. Mg(2+) is required as a cofactor.

The catalysed reaction is (2R)-2,3-dihydroxy-3-methylbutanoate = 3-methyl-2-oxobutanoate + H2O. It catalyses the reaction (2R,3R)-2,3-dihydroxy-3-methylpentanoate = (S)-3-methyl-2-oxopentanoate + H2O. It participates in amino-acid biosynthesis; L-isoleucine biosynthesis; L-isoleucine from 2-oxobutanoate: step 3/4. Its pathway is amino-acid biosynthesis; L-valine biosynthesis; L-valine from pyruvate: step 3/4. Functionally, functions in the biosynthesis of branched-chain amino acids. Catalyzes the dehydration of (2R,3R)-2,3-dihydroxy-3-methylpentanoate (2,3-dihydroxy-3-methylvalerate) into 2-oxo-3-methylpentanoate (2-oxo-3-methylvalerate) and of (2R)-2,3-dihydroxy-3-methylbutanoate (2,3-dihydroxyisovalerate) into 2-oxo-3-methylbutanoate (2-oxoisovalerate), the penultimate precursor to L-isoleucine and L-valine, respectively. The protein is Dihydroxy-acid dehydratase of Buchnera aphidicola subsp. Cinara cedri (strain Cc).